Here is a 302-residue protein sequence, read N- to C-terminus: Pyridoxal kinase (302 aa).

Substrate-binding residues include S10, T45, and Y122. Residues 181–182 and 215–227 each bind ATP; these read TS and VGPK…TGTG. D228 serves as a coordination point for substrate.

The protein belongs to the pyridoxine kinase family. In terms of assembly, homodimer. Requires a divalent metal cation as cofactor.

It is found in the cytoplasm. The catalysed reaction is pyridoxal + ATP = pyridoxal 5'-phosphate + ADP + H(+). Its pathway is cofactor metabolism; pyridoxal 5'-phosphate salvage; pyridoxal 5'-phosphate from pyridoxal: step 1/1. Its function is as follows. Required for synthesis of pyridoxal-5-phosphate from vitamin B6. The protein is Pyridoxal kinase (pykA) of Dictyostelium discoideum (Social amoeba).